The chain runs to 301 residues: Probable alpha-L-glutamate ligase (301 aa).

The 184-residue stretch at 104-287 (LQLLSRKGVG…IAGMIIEYIE (184 aa)) folds into the ATP-grasp domain. Residues Lys-141, 178 to 179 (EY), Asp-187, and 211 to 213 (RSN) contribute to the ATP site. Mg(2+) contacts are provided by Asp-248, Glu-260, and Asn-262. 3 residues coordinate Mn(2+): Asp-248, Glu-260, and Asn-262.

The protein belongs to the RimK family. Mg(2+) serves as cofactor. It depends on Mn(2+) as a cofactor.

The polypeptide is Probable alpha-L-glutamate ligase (Photobacterium profundum (strain SS9)).